The chain runs to 117 residues: Large ribosomal subunit protein bL19 (117 aa).

The protein belongs to the bacterial ribosomal protein bL19 family.

Functionally, this protein is located at the 30S-50S ribosomal subunit interface and may play a role in the structure and function of the aminoacyl-tRNA binding site. This Shewanella amazonensis (strain ATCC BAA-1098 / SB2B) protein is Large ribosomal subunit protein bL19.